The following is a 528-amino-acid chain: Bifunctional purine biosynthesis protein PurH (528 aa).

Residues 2–149 enclose the MGS-like domain; sequence TDLAPLRRAL…KNHGFVSVVV (148 aa).

Belongs to the PurH family.

The enzyme catalyses (6R)-10-formyltetrahydrofolate + 5-amino-1-(5-phospho-beta-D-ribosyl)imidazole-4-carboxamide = 5-formamido-1-(5-phospho-D-ribosyl)imidazole-4-carboxamide + (6S)-5,6,7,8-tetrahydrofolate. It carries out the reaction IMP + H2O = 5-formamido-1-(5-phospho-D-ribosyl)imidazole-4-carboxamide. It participates in purine metabolism; IMP biosynthesis via de novo pathway; 5-formamido-1-(5-phospho-D-ribosyl)imidazole-4-carboxamide from 5-amino-1-(5-phospho-D-ribosyl)imidazole-4-carboxamide (10-formyl THF route): step 1/1. It functions in the pathway purine metabolism; IMP biosynthesis via de novo pathway; IMP from 5-formamido-1-(5-phospho-D-ribosyl)imidazole-4-carboxamide: step 1/1. In Roseobacter denitrificans (strain ATCC 33942 / OCh 114) (Erythrobacter sp. (strain OCh 114)), this protein is Bifunctional purine biosynthesis protein PurH.